The primary structure comprises 461 residues: Steroidogenic factor 1 (461 aa).

A DNA-binding region (nuclear receptor) is located at residues 10 to 85; sequence DELCPVCGDK…VGMRLEAVRA (76 aa). Residues 13-33 form an NR C4-type zinc finger; the sequence is CPVCGDKVSGYHYGLLTCESC. 3 positions are modified to N6-acetyllysine: Lys-34, Lys-38, and Lys-72. Residues 49–73 form an NR C4-type zinc finger; the sequence is CTESQSCKIDKTQRKRCPFCRFQKC. Lys-119 is covalently cross-linked (Glycyl lysine isopeptide (Lys-Gly) (interchain with G-Cter in SUMO)). A disordered region spans residues 119–150; the sequence is KLETGPPMGVAPPPPPPPDYMLPPGLHAPEPK. Residues 127–139 are compositionally biased toward pro residues; that stretch reads GVAPPPPPPPDYM. A Glycyl lysine isopeptide (Lys-Gly) (interchain with G-Cter in SUMO) cross-link involves residue Lys-194. A Phosphoserine; by CDK7 modification is found at Ser-203. Residues 222-459 enclose the NR LBD domain; it reads GVPELIVQLL…NLLIEMLQAK (238 aa). Residues 230–461 form an important for dimerization region; that stretch reads LLQLEPDEDQ…LIEMLQAKQT (232 aa). A 1,2-diacyl-sn-glycero-3-phosphocholine-binding residues include Gly-341, Tyr-436, and Lys-440.

This sequence belongs to the nuclear hormone receptor family. NR5 subfamily. As to quaternary structure, binds DNA as a monomer. Part of a complex consisting of SFPQ, NONO and NR5A1. Interacts with NR0B2, NCOA2 and PPARGC1A. Interacts with DGKQ and CDK7. Binds to and activated by HIPK3. Post-translationally, acetylation stimulates the transcriptional activity. In terms of processing, sumoylation reduces CDK7-mediated phosphorylation on Ser-203. Phosphorylated on Ser-203 by CDK7. This phosphorylation promotes transcriptional activity.

Its subcellular location is the nucleus. Its function is as follows. Transcriptional activator. Seems to be essential for sexual differentiation and formation of the primary steroidogenic tissues. Binds to the Ad4 site found in the promoter region of steroidogenic P450 genes such as CYP11A, CYP11B and CYP21B. Also regulates the AMH/Muellerian inhibiting substance gene as well as the AHCH and STAR genes. 5'-YCAAGGYC-3' and 5'-RRAGGTCA-3' are the consensus sequences for the recognition by NR5A1. The SFPQ-NONO-NR5A1 complex binds to the CYP17 promoter and regulates basal and cAMP-dependent transcriptional activity. Binds phosphatidylcholine and phospholipids with a phosphatidylinositol (PI) headgroup, in particular PI(3,4)P2 and PI(3,4,5)P3. Activated by the phosphorylation of NR5A1 by HIPK3 leading to increased steroidogenic gene expression upon cAMP signaling pathway stimulation. The polypeptide is Steroidogenic factor 1 (NR5A1) (Sus scrofa (Pig)).